The chain runs to 200 residues: Large ribosomal subunit protein uL4 (200 aa).

The tract at residues 38-80 (GRQGSKQQKTRSDVSGGGKRPWRQKGTGRARAGTTRGPIWRGG) is disordered.

This sequence belongs to the universal ribosomal protein uL4 family. Part of the 50S ribosomal subunit.

In terms of biological role, one of the primary rRNA binding proteins, this protein initially binds near the 5'-end of the 23S rRNA. It is important during the early stages of 50S assembly. It makes multiple contacts with different domains of the 23S rRNA in the assembled 50S subunit and ribosome. Forms part of the polypeptide exit tunnel. The protein is Large ribosomal subunit protein uL4 of Stutzerimonas stutzeri (strain A1501) (Pseudomonas stutzeri).